The chain runs to 290 residues: Small ribosomal subunit biogenesis GTPase RsgA (290 aa).

The CP-type G domain occupies 62-213 (KNSLVRPPIV…IADTPGFSSL (152 aa)). Residues 111-114 (SKMD) and 156-164 (GQTGVGKST) each bind GTP. 4 residues coordinate Zn(2+): C237, C242, H244, and C250.

This sequence belongs to the TRAFAC class YlqF/YawG GTPase family. RsgA subfamily. As to quaternary structure, monomer. Associates with 30S ribosomal subunit, binds 16S rRNA. The cofactor is Zn(2+).

The protein localises to the cytoplasm. Functionally, one of several proteins that assist in the late maturation steps of the functional core of the 30S ribosomal subunit. Helps release RbfA from mature subunits. May play a role in the assembly of ribosomal proteins into the subunit. Circularly permuted GTPase that catalyzes slow GTP hydrolysis, GTPase activity is stimulated by the 30S ribosomal subunit. The polypeptide is Small ribosomal subunit biogenesis GTPase RsgA (Streptococcus pyogenes serotype M3 (strain ATCC BAA-595 / MGAS315)).